We begin with the raw amino-acid sequence, 759 residues long: Rab guanine nucleotide exchange factor SEC2 (759 aa).

Met1 bears the N-acetylmethionine mark. Residues 26–164 adopt a coiled-coil conformation; sequence DKQSHLEEQL…KKVMHSLDNE (139 aa). At Thr168 the chain carries Phosphothreonine. Ser171 bears the Phosphoserine mark. Residues 451–508 are required for proper polarized localization of the protein; it reads TKNKPKMEIFSSETNAKPGQPTTNIQRAWLQLCKLRCILHWTHIGIWAVDDSISSKIG. Ser515 is modified (phosphoserine). Residues 538–759 are disordered; that stretch reads KRPFSSSSAE…DNFDDAQEQQ (222 aa). The segment covering 555 to 576 has biased composition (acidic residues); the sequence is FDFESGDMENEITGESSSDESS. Low complexity-rich tracts occupy residues 577-589 and 597-612; these read SDGS…TADS and LADS…SPES. A compositionally biased stretch (basic residues) spans 648-664; that stretch reads RSIIKKKAPQRKIQKKK. Residues 651–682 adopt a coiled-coil conformation; that stretch reads IKKKAPQRKIQKKKLLQDLDDLEEQFREESAI. Over residues 690–703 the composition is skewed to polar residues; it reads AESNVKQNISSKRA. Positions 704–719 are enriched in basic and acidic residues; the sequence is SSGDENSKKDNNEKTL. Residues 731 to 744 show a composition bias toward polar residues; it reads EQIGENSPSSGLHA. Residues 732–759 are a coiled coil; it reads QIGENSPSSGLHASSSNDDNFDDAQEQQ. Residues 750-759 are compositionally biased toward acidic residues; the sequence is DNFDDAQEQQ.

The protein belongs to the SEC2 family. As to quaternary structure, interacts with SEC4. Interacts with YPT32, preferentially in its GTP-bound form.

It is found in the bud neck. It localises to the bud tip. The protein localises to the cytoplasmic vesicle. Its subcellular location is the secretory vesicle. Functionally, guanine nucleotide exchange factor for SEC4, catalyzing the dissociation of GDP from SEC4 and also potently promoting binding of GTP. Activation of SEC4 by SEC2 is needed for the directed transport of vesicles to sites of exocytosis. Binds the Rab GTPase YPT32, but does not have exchange activity on YPT32. The protein is Rab guanine nucleotide exchange factor SEC2 (SEC2) of Saccharomyces cerevisiae (strain ATCC 204508 / S288c) (Baker's yeast).